A 184-amino-acid polypeptide reads, in one-letter code: Oligoribonuclease (184 aa).

The Exonuclease domain maps to 10–172 (LVWVDCEMTG…ADVLESIAEL (163 aa)). Y129 is a catalytic residue.

This sequence belongs to the oligoribonuclease family.

Its subcellular location is the cytoplasm. 3'-to-5' exoribonuclease specific for small oligoribonucleotides. This chain is Oligoribonuclease, found in Tropheryma whipplei (strain Twist) (Whipple's bacillus).